The chain runs to 182 residues: Adenine phosphoribosyltransferase (182 aa).

This sequence belongs to the purine/pyrimidine phosphoribosyltransferase family. As to quaternary structure, homodimer.

It is found in the cytoplasm. It carries out the reaction AMP + diphosphate = 5-phospho-alpha-D-ribose 1-diphosphate + adenine. It participates in purine metabolism; AMP biosynthesis via salvage pathway; AMP from adenine: step 1/1. Catalyzes a salvage reaction resulting in the formation of AMP, that is energically less costly than de novo synthesis. In Pseudomonas paraeruginosa (strain DSM 24068 / PA7) (Pseudomonas aeruginosa (strain PA7)), this protein is Adenine phosphoribosyltransferase.